The chain runs to 515 residues: Cytosolic Fe-S cluster assembly factor NAR1 homolog (515 aa).

Residues cysteine 19, cysteine 65, cysteine 68, cysteine 71, cysteine 192, cysteine 247, cysteine 428, and cysteine 432 each coordinate [4Fe-4S] cluster.

Belongs to the NARF family.

Component of the cytosolic Fe/S protein assembly machinery. Required for maturation of extramitochondrial Fe/S proteins. May play a role in the transfer of pre-assembled Fe/S clusters to target apoproteins. This is Cytosolic Fe-S cluster assembly factor NAR1 homolog from Schizosaccharomyces japonicus (strain yFS275 / FY16936) (Fission yeast).